A 531-amino-acid chain; its full sequence is Acyl-CoA ligase azaF (531 aa).

188-199 contributes to the AMP binding site; that stretch reads RLFSSGTTGLPK. The interval 449–525 is AMP-binding; sequence EVEGVLRNHP…DAIPRNASGK (77 aa).

Belongs to the ATP-dependent AMP-binding enzyme family.

Its pathway is secondary metabolite biosynthesis. Functionally, acyl-CoA ligase; part of the gene cluster that mediates the biosynthesis of azaphilones, a class of fungal metabolites characterized by a highly oxygenated pyrano-quinone bicyclic core and exhibiting a broad range of bioactivities. In the first step, the non-reducing polyketide synthase azaA forms the hexaketide precursor from successive condensations of five malonyl-CoA units, presumably with a simple acetyl-CoA starter unit. The reactive polyketide chain then undergoes a PT-mediated C2-C7 cyclization to afford the aromatic ring and is eventually released as an aldehyde through the R-domain. The putative ketoreductase azaE is proposed to catalyze the reduction of the terminal ketone resulting in the early culture product FK17-P2a. The monooxygenase azaH was demonstrated to be the only enzyme required to convert FK17-P2a to azanigerone E. AzaH first hydroxylates the benzaldehyde intermediate FK17-P2a at C4, which triggers the formation of the pyran-ring to afford azanigerone E. In parallel, the 2,4-dimethylhexanoyl chain is synthesized by the HR-PKS azaB and is proposed to be transferred to the C4-hydroxyl of azanigerone E by the acyltransferase azaD directly from the ACP domain of azaB. Alternatively, the 2,4-dimethyl-hexanoyl chain may be offloaded from the HR-PKS as a carboxylic acid and converted to an acyl-CoA by azaF. The resulting acyl-CoA molecule could then be taken up as a substrate by AzaD to form azanigerone B. To yield the carboxylic acid substituent in azanigerone A, the hydroxypropyl side chain of azanigerone B would need to undergo a C-C oxidative cleavage catalyzed by cytochrome P450 AzaI. AzaI is proposed to act on a vicinal diol that leads to a C-C bond scission either through an alkoxyradical intermediate or a peroxy complex. In the biosynthesis of azanigerone A, azanigerone B first undergoes hydroxylation at C10, possibly catalyzed by one of the two FAD-dependent monooxygenases encoded in the cluster, azaG or azaL, resulting in the vicinal diol azanigerone C. Oxidative cleavage of azanigerone C by azaI would yield the corresponding aldehyde derivative of azanigerone A. Finally, the dehydrogenase azaJ is proposed to convert the aldehyde functional group into the carboxylic acid, completing the conversion from azanigerone B to azanigerone A. Alternatively, the oxidation of aldehyde to carboxylic acid may be catalyzed by the same P450 enzyme azaI via consecutive oxidation or by endogenous alcohol dehydrogenase. The polypeptide is Acyl-CoA ligase azaF (Aspergillus niger (strain ATCC 1015 / CBS 113.46 / FGSC A1144 / LSHB Ac4 / NCTC 3858a / NRRL 328 / USDA 3528.7)).